We begin with the raw amino-acid sequence, 184 residues long: Photosystem I assembly protein Ycf4 (184 aa).

The next 2 helical transmembrane spans lie at 21–43 (NYFWATVVFLGSLGFFIVGVSSY) and 63–85 (GIVMCFYGIAGLFLSFYLWFTIF).

This sequence belongs to the Ycf4 family.

It is found in the plastid. The protein localises to the chloroplast thylakoid membrane. Functionally, seems to be required for the assembly of the photosystem I complex. The protein is Photosystem I assembly protein Ycf4 of Chaetosphaeridium globosum (Charophycean green alga).